Reading from the N-terminus, the 442-residue chain is Decapping and exoribonuclease protein 1 (442 aa).

A compositionally biased stretch (basic and acidic residues) spans 31–40 (QSKLCKEKTT). The tract at residues 31–56 (QSKLCKEKTTSDSSSSRKPSQQRDNY) is disordered. Over residues 41-53 (SDSSSSRKPSQQR) the composition is skewed to low complexity. Arg-101 is a binding site for substrate. Glu-255 is a binding site for a divalent metal cation. Substrate is bound at residue Glu-293. A divalent metal cation contacts are provided by Asp-295, Glu-306, and Leu-307. Substrate contacts are provided by Lys-308 and Gln-330.

It belongs to the DXO/Dom3Z family. Requires a divalent metal cation as cofactor.

It localises to the cytoplasm. The catalysed reaction is a 5'-end NAD(+)-phospho-ribonucleoside in mRNA + H2O = a 5'-end phospho-ribonucleoside in mRNA + NAD(+) + H(+). It catalyses the reaction a 5'-end (N(7)-methyl 5'-triphosphoguanosine)-ribonucleoside-ribonucleotide in mRNA + H2O = a (N(7)-methyl 5'-triphosphoguanosine)-nucleoside + a 5'-end phospho-ribonucleoside in mRNA + H(+). Its function is as follows. Decapping enzyme for NAD-capped RNAs: specifically hydrolyzes the nicotinamide adenine dinucleotide (NAD) cap from a subset of RNAs by removing the entire NAD moiety from the 5'-end of an NAD-capped RNA. The NAD-cap is present at the 5'-end of some RNAs and snoRNAs. In contrast to the canonical 5'-end N7 methylguanosine (m7G) cap, the NAD cap promotes mRNA decay. Also acts as a non-canonical decapping enzyme that removes the entire cap structure of m7G capped or incompletely capped RNAs. Has decapping activity toward incomplete 5'-end m7G cap mRNAs such as unmethylated 5'-end-capped RNA (cap0), while it has no activity toward 2'-O-ribose methylated m7G cap (cap1). Also has 5'-3' exonuclease activity. The chain is Decapping and exoribonuclease protein 1 (DXO1) from Saccharomyces cerevisiae (strain ATCC 204508 / S288c) (Baker's yeast).